We begin with the raw amino-acid sequence, 104 residues long: uncharacterized protein (104 aa).

It belongs to the mimivirus L28/L54 family.

This is an uncharacterized protein from Acanthamoeba polyphaga mimivirus (APMV).